We begin with the raw amino-acid sequence, 193 residues long: uncharacterized protein (193 aa).

This is an uncharacterized protein from Bacillus subtilis (strain 168).